The sequence spans 337 residues: tRNA N6-adenosine threonylcarbamoyltransferase (337 aa).

Residues histidine 111 and histidine 115 each coordinate Fe cation. Residues 134–138 (LVSGG), aspartate 167, glycine 180, and asparagine 272 each bind substrate. Aspartate 300 is a Fe cation binding site.

The protein belongs to the KAE1 / TsaD family. Fe(2+) serves as cofactor.

The protein localises to the cytoplasm. The enzyme catalyses L-threonylcarbamoyladenylate + adenosine(37) in tRNA = N(6)-L-threonylcarbamoyladenosine(37) in tRNA + AMP + H(+). Required for the formation of a threonylcarbamoyl group on adenosine at position 37 (t(6)A37) in tRNAs that read codons beginning with adenine. Is involved in the transfer of the threonylcarbamoyl moiety of threonylcarbamoyl-AMP (TC-AMP) to the N6 group of A37, together with TsaE and TsaB. TsaD likely plays a direct catalytic role in this reaction. The polypeptide is tRNA N6-adenosine threonylcarbamoyltransferase (Escherichia coli O157:H7).